The sequence spans 406 residues: Elongation factor Tu (406 aa).

The region spanning 10–215 is the tr-type G domain; sequence KPHVNVGTIG…AIDEYIPTPV (206 aa). The interval 19–26 is G1; that stretch reads GHVDHGKT. GTP is bound at residue 19-26; sequence GHVDHGKT. Thr-26 is a binding site for Mg(2+). The interval 61-65 is G2; that stretch reads GITIN. A G3 region spans residues 82–85; sequence DCPG. Residues 82-86 and 137-140 contribute to the GTP site; these read DCPGH and NKVD. The interval 137–140 is G4; sequence NKVD. Residues 175-177 form a G5 region; it reads SAL.

This sequence belongs to the TRAFAC class translation factor GTPase superfamily. Classic translation factor GTPase family. EF-Tu/EF-1A subfamily. As to quaternary structure, monomer.

It localises to the cytoplasm. It carries out the reaction GTP + H2O = GDP + phosphate + H(+). Its function is as follows. GTP hydrolase that promotes the GTP-dependent binding of aminoacyl-tRNA to the A-site of ribosomes during protein biosynthesis. The chain is Elongation factor Tu from Thermus thermophilus (strain ATCC BAA-163 / DSM 7039 / HB27).